The following is a 619-amino-acid chain: Thiohydroximate-O-sulfate sulfur/sulfate-lyase (nitrile-forming) NSP4 (619 aa).

2 consecutive Jacalin-type lectin domains span residues 2–142 (AQKV…YFAP) and 151–292 (AKKL…YISL). 5 Kelch repeats span residues 326–374 (KIYS…VCMV), 379–425 (TLYV…SMAA), 429–478 (NVYV…VVQG), 480–524 (VWVV…ASAA), and 528–583 (HIVI…GWTA). The Proton donor role is filled by Arg386. A (Z)-N-(sulfonatooxy)alkanimidothioate-binding residues include Arg386, Ser419, Arg441, Gly470, and Val519. The active-site Proton donor is the Arg441. Residues Glu535, Asp539, and His543 each contribute to the Fe(2+) site. Residue Trp581 coordinates a (Z)-N-(sulfonatooxy)alkanimidothioate.

Belongs to the jacalin lectin family. Fe(2+) serves as cofactor. In terms of tissue distribution, mainly expressed in roots, and, to a lower extent, in seedlings and leaves. Observed in seeds.

The catalysed reaction is a (Z)-N-(sulfonatooxy)alkanimidothioate = a nitrile + sulfur + sulfate. It catalyses the reaction (Z)-phenyl-N-(sulfonatooxy)methanimidothioate = phenylacetonitrile + sulfur + sulfate. It carries out the reaction (Z)-N-(sulfonatooxy)prop-2-enimidothioate = but-3-enenitrile + sulfur + sulfate. Functionally, specifier protein that contributes to constitutive and herbivore-induced simple nitrile formation. Promotes simple nitriles, but not epithionitrile or thiocyanate formation. Converts allylglucosinolate and benzylglucosinolate (glucotropaeolin) to their corresponding simple nitriles in the presence of myrosinase. The protein is Thiohydroximate-O-sulfate sulfur/sulfate-lyase (nitrile-forming) NSP4 of Arabidopsis thaliana (Mouse-ear cress).